A 685-amino-acid polypeptide reads, in one-letter code: MKYCTESLILILAVIGCISAAINFKCPKGTAEEKHQKEIYDLVQRINRPLIPQFKEPNFPTSFLIKGKDPKEFFQAIGHLPKKEVFSLFDERHWDEAMTAYEYLYEAETLDDFIDIAKILYLHLNEDMFYYVFSFAVLYRKDTRNVRLPQVHDVYPDKFLKTDIINKIKQANYQGKQHPVIDATKEFHDLRNPVSYLHYFLEDIGMNSHHYHWHVMNSALRKAYPTEGEKKFYRKGELFYHMHHQMLNRYELERLSNGLPRCPTFENWDDPIAEGYASHLAVDRTGYRYTFRPDNLHVRDLPELTKDNMRVWRDRIFDAATSCSVLRENGSFVKICRTRFYGGLNILGNLIESNLRSINRMFYGNIHCYAHVIAARVTDPDGKYGQGNGVMYDVATSARDPLFYQWHKFLDHFFYEHLTKLPTNHLFHLQNPDVSITNLEIISNGRKNEIHTFWENDIMEISKGHSFTLNSDAKVKIQHLQHEKFEIHLTVQNDKGEDTDLFVRIFLLPLEDEESHELSLEEMVRMAVDIEKRVIPAKPGSNDIVISSRSIGAPANKFFGSFEERYISEDCNFHSHCGWPNYLLVPKGSSQGTPFAFVVMLTLAEDDFTPNMDDTCFCADSWSHCGSLFIQYPENVEMGFPFQPIIECTKEEFFALPNIAKQEVIIKFTGETKDSPLVIQLENDS.

Residues 1–20 form the signal peptide; the sequence is MKYCTESLILILAVIGCISA. Positions 210, 214, and 243 each coordinate Cu cation. N329 is a glycosylation site (N-linked (GlcNAc...) asparagine). Cu cation-binding residues include H367, H371, and H407. A disulfide bond links C577 and C625.

It belongs to the tyrosinase family. Hemocyanin subfamily.

It localises to the secreted. The protein localises to the extracellular space. Hemocyanins are copper-containing oxygen carriers occurring freely dissolved in the hemolymph of many mollusks and arthropods. This is Hemocyanin subunit X (HCX) from Scutigera coleoptrata (House centipede).